Reading from the N-terminus, the 208-residue chain is NAD(P)H-quinone oxidoreductase subunit I (208 aa).

4Fe-4S ferredoxin-type domains follow at residues 55–84 (GRIHYEFDKCIACEVCVRVCPINLPVVDWV) and 95–124 (RNYSIDFGVCIFCGNCVEYCPTNCLSMTEE). [4Fe-4S] cluster-binding residues include C64, C67, C70, C74, C104, C107, C110, and C114.

The protein belongs to the complex I 23 kDa subunit family. NDH-1 is composed of at least 11 different subunits. It depends on [4Fe-4S] cluster as a cofactor.

It is found in the cellular thylakoid membrane. It carries out the reaction a plastoquinone + NADH + (n+1) H(+)(in) = a plastoquinol + NAD(+) + n H(+)(out). It catalyses the reaction a plastoquinone + NADPH + (n+1) H(+)(in) = a plastoquinol + NADP(+) + n H(+)(out). In terms of biological role, NDH-1 shuttles electrons from an unknown electron donor, via FMN and iron-sulfur (Fe-S) centers, to quinones in the respiratory and/or the photosynthetic chain. The immediate electron acceptor for the enzyme in this species is believed to be plastoquinone. Couples the redox reaction to proton translocation, and thus conserves the redox energy in a proton gradient. The protein is NAD(P)H-quinone oxidoreductase subunit I of Prochlorococcus marinus (strain MIT 9312).